Here is a 364-residue protein sequence, read N- to C-terminus: Peptide chain release factor 1 (364 aa).

At Gln237 the chain carries N5-methylglutamine.

It belongs to the prokaryotic/mitochondrial release factor family. In terms of processing, methylated by PrmC. Methylation increases the termination efficiency of RF1.

Its subcellular location is the cytoplasm. In terms of biological role, peptide chain release factor 1 directs the termination of translation in response to the peptide chain termination codons UAG and UAA. This chain is Peptide chain release factor 1, found in Rubrobacter xylanophilus (strain DSM 9941 / JCM 11954 / NBRC 16129 / PRD-1).